A 717-amino-acid chain; its full sequence is Mitotic spindle assembly checkpoint protein MAD1 (717 aa).

Met-1 is subject to N-acetylmethionine. Ser-16 bears the Phosphoserine mark. A coiled-coil region spans residues 46–631 (EQSMQLEERA…QTKIQEFRKV (586 aa)). Position 61 is an N6-acetyllysine; alternate (Lys-61). Residue Lys-61 forms a Glycyl lysine isopeptide (Lys-Gly) (interchain with G-Cter in SUMO2); alternate linkage. Positions 79-82 (KRAR) match the Nuclear localization signal motif. A phosphoserine mark is found at Ser-214 and Ser-428. The segment at 380–532 (LLEERKKREI…EMQMERLTLQ (153 aa)) is necessary for interaction with NEK2. The necessary for interaction with MAD2L1 stretch occupies residues 540–551 (TKVLHMSLNPAS).

The protein belongs to the MAD1 family. In terms of assembly, homodimer. Dimerizes via its N- and C- terminal regions. Heterodimerizes with MAD2L1 in order to form a tetrameric MAD1L1-MAD2L1 core complex. Interacts with the closed conformation form of MAD2L1 (C-MAD2) and open conformation form of MAD2L1 (O-MAD2). It is unclear whether MAD1L1 dimerization promotes the conversion of closed to open conformation of MAD2L1. Formation of a heterotetrameric core complex containing two molecules each of MAD1L1 and of MAD2L1 promotes binding of another molecule of MAD2L1 to each MAD2L1, resulting in a heterohexamer. Perturbation of the original MAD1L1-MAD2L1 structure by the spindle checkpoint may decrease MAD2L1 affinity for MAD1L1. CDC20 can compete with MAD1L1 for MAD2L1 binding, until the attachment and/or tension dampen the checkpoint signal, preventing further release of MAD2L1 on to CDC20. Also able to interact with the BUB1/BUB3 complex. Interacts with NEK2. Interacts with TTK. Interacts with TPR; the interactions occurs in a microtubule-independent manner. Interacts with IK. Interacts with the viral Tax protein. Interacts with PRAP1. In terms of processing, phosphorylated; by BUB1. Become hyperphosphorylated in late S through M phases or after mitotic spindle damage.

Its subcellular location is the nucleus. It localises to the chromosome. The protein localises to the centromere. The protein resides in the kinetochore. It is found in the nucleus envelope. Its subcellular location is the cytoplasm. It localises to the cytoskeleton. The protein localises to the microtubule organizing center. The protein resides in the centrosome. It is found in the spindle. Its subcellular location is the spindle pole. In terms of biological role, component of the spindle-assembly checkpoint that prevents the onset of anaphase until all chromosomes are properly aligned at the metaphase plate. Forms a heterotetrameric complex with the closed conformation form of MAD2L1 (C-MAD2) at unattached kinetochores during prometaphase, recruits an open conformation of MAD2L1 (O-MAD2) and promotes the conversion of O-MAD2 to C-MAD2, which ensures mitotic checkpoint signaling. The polypeptide is Mitotic spindle assembly checkpoint protein MAD1 (MAD1L1) (Cricetulus griseus (Chinese hamster)).